The chain runs to 933 residues: Potassium voltage-gated channel subfamily KQT member 5 (933 aa).

The Cytoplasmic segment spans residues 1–126 (MPRHHAGGEE…YNVLERPRGW (126 aa)). Ser-89 carries the post-translational modification Phosphoserine. Residues 127-147 (AFVYHAFVFLLVFGCLILSVF) form a helical membrane-spanning segment. Residues 148 to 157 (STIPEHTKLA) lie on the Extracellular side of the membrane. Residues 158–178 (SSCLLILEFVMIVVFGLEFII) form a helical membrane-spanning segment. Residues 179 to 201 (RIWSAGCCCRYRGWQGRLRFARK) lie on the Cytoplasmic side of the membrane. A helical membrane pass occupies residues 202–222 (PFCVIDTIVLIASIAVVSAKT). The Extracellular segment spans residues 223–230 (QGNIFATS). The chain crosses the membrane as a helical; Voltage-sensor span at residues 231–253 (ALRSLRFLQILRMVRMDRRGGTW). Residues Arg-249 and Lys-265 each coordinate a 1,2-diacyl-sn-glycero-3-phospho-(1D-myo-inositol-4,5-bisphosphate). Over 254–267 (KLLGSVVYAHSKEL) the chain is Cytoplasmic. A helical transmembrane segment spans residues 268-288 (ITAWYIGFLVLIFSSFLVYLV). Topologically, residues 289 to 299 (EKDANKEFSTY) are extracellular. Residues 300–320 (ADALWWGTITLTTIGYGDKTP) constitute an intramembrane region (pore-forming). The Extracellular segment spans residues 321–326 (LTWLGR). Residues 327 to 347 (LLSAGFALLGISFFALPAGIL) traverse the membrane as a helical segment. At 348–933 (GSGFALKVQE…ALSLPHVKLN (586 aa)) the chain is on the cytoplasmic side. Lys-362 lines the a 1,2-diacyl-sn-glycero-3-phospho-(1D-myo-inositol-4,5-bisphosphate) pocket. The interval 371 to 379 (AANLIQCVW) is interaction with CALM. The interval 405-465 (SPTKKEQGEA…EGSPTKVQKS (61 aa)) is disordered. The span at 432–441 (RGQSIKSRQA) shows a compositional bias: polar residues. Ser-448 carries the phosphoserine modification. An interaction with CALM region spans residues 522 to 529 (VIRAIRIM). Positions 578 to 598 (KGQMTSDKKSREKITAEHETT) are disordered. Residues 583–598 (SDKKSREKITAEHETT) show a composition bias toward basic and acidic residues. A Phosphoserine modification is found at Ser-832. The segment at 878–933 (GAEETETDTFDGTPPPAGEAAFSSDSLRTGRSRSSQNICKTGDSTDALSLPHVKLN) is disordered. The segment covering 900 to 924 (SSDSLRTGRSRSSQNICKTGDSTDA) has biased composition (polar residues).

It belongs to the potassium channel family. KQT (TC 1.A.1.15) subfamily. Kv7.5/KCNQ5 sub-subfamily. Homotetramer; forms a functional homotetrameric channel resulting in the expression of a small M-current. Heterotetramer with KCNQ3; forms heterotetrameric M-channel responsible for the native M-current. Heterotetramer with KCNQ1; forms a functional voltage-gated potassium channel. Interacts (via C-terminus) with calmodulin/CALM; forms a heterooctameric structure (with 4:4 KCNQ1:CALM stoichiometry); the interaction is calcium-independent, constitutive and participates in the channel function. As to expression, strongly expressed in brain. Also expressed in colon, lung and uterus.

It localises to the cell membrane. The enzyme catalyses K(+)(in) = K(+)(out). Phosphatidylinositol-4,5-bisphosphate (PIP2) is essential to activate KCNQ5 channel by inducing the coupling of the voltage-sensing domain (VSD) and the pore-forming domain (PD). Calcium suppresses KCNQ5 channel current through calcium-bound CALM C-terminus. Therefore CALM acts as calcium sensor that controls channel activity. Zinc potentiates channel activity in a pH-dependent manner. The activity is modulated by small changes in cell volume. Activated by the anticonvulsant retigabine. Inhibited by linopirdine and XE991. Its function is as follows. Pore-forming subunit of the voltage-gated potassium (Kv) channel broadly expressed in brain and skeletal muscle and involved in the regulation of neuronal excitability. Associates with KCNQ3/Kv7.3 pore-forming subunit to form a potassium channel which contributes to M-type current, a slowly activating and deactivating potassium conductance which plays a critical role in determining the subthreshold electrical excitability of neurons. Contributes, with other potassium channels, to the molecular diversity of a heterogeneous population of M-channels, varying in kinetic and pharmacological properties, which underlie this physiologically important current. Also forms a functional channel with KCNQ1/Kv7.1 subunit that may contribute to vasoconstriction and hypertension. Channel may be selectively permeable in vitro to other cations besides potassium, in decreasing order of affinity K(+) = Rb(+) &gt; Cs(+) &gt; Na(+). This Mus musculus (Mouse) protein is Potassium voltage-gated channel subfamily KQT member 5.